A 1407-amino-acid polypeptide reads, in one-letter code: Adenylate cyclase, aggregation specific (1407 aa).

Residues 1–219 lie on the Cytoplasmic side of the membrane; it reads MASSSPMFND…KGYLHQHYNS (219 aa). Residues 28–131 form a disordered region; the sequence is NELHDGNGGG…SNSVANGGHL (104 aa). Positions 51 to 63 are enriched in polar residues; the sequence is LNKSQNQPYTQYN. Residues 64–75 are compositionally biased toward gly residues; the sequence is NGGGGGGGGGGH. Composition is skewed to low complexity over residues 80 to 90 and 98 to 115; these read HLNLNSITNNH and PNTL…NNHS. The next 6 helical transmembrane spans lie at 220–240, 244–264, 276–296, 304–324, 325–345, and 353–373; these read QIML…YGFT, IFML…SIFL, LFHP…LLEY, ILFL…LLFI, WMVM…FLES, and ISFV…LYVL. At 374–962 the chain is on the cytoplasmic side; it reads EKFRKESFIA…KYVIINNVVE (589 aa). Positions 438 to 661 constitute a Guanylate cyclase 1 domain; that stretch reads SILCFDIVQF…DTIARSHTLE (224 aa). Positions 443, 444, and 488 each coordinate Mg(2+). Disordered regions lie at residues 502–590, 751–799, and 828–876; these read AKKQ…EEIE, KSNN…VLGE, and NDIV…EEDF. Composition is skewed to low complexity over residues 505–526, 535–581, and 752–795; these read QMPN…VNNI, NNNN…NNSG, and SNNN…SSSS. The segment covering 828–846 has biased composition (polar residues); that stretch reads NDIVSPSLTSNSPILDTTV. Residues 847 to 871 are compositionally biased toward low complexity; sequence NNNNNNNNTNNNNKNQNNIYGNNNN. The next 5 membrane-spanning stretches (helical) occupy residues 963–979, 992–1012, 1018–1038, 1071–1091, and 1105–1125; these read TKFF…MFYL, SNVI…LSFT, PLVY…CTVL, LSVL…SILI, and IGFV…KLAM. A Guanylate cyclase 2 domain is found at 1189 to 1311; the sequence is SIMFIQIAGF…DTANTASRMQ (123 aa). The chain crosses the membrane as a helical span at residues 1378 to 1398; the sequence is ATPAGIASPLSGTLLGEIGSF. The Cytoplasmic segment spans residues 1399 to 1407; the sequence is TTPRFHLSS.

It belongs to the adenylyl cyclase class-4/guanylyl cyclase family. Mg(2+) serves as cofactor. As to expression, expressed throughout the structure in the tipped mound and finger. Expressed primarily in the prestalk region of the slug. In the early culminant expression is increased in the posterior prespore and anterior-most regions and expands into the developing stalk. In the mid and late culminant it is expressed throughout the stalk.

It is found in the membrane. The protein localises to the cell projection. Its subcellular location is the uropodium. It carries out the reaction ATP = 3',5'-cyclic AMP + diphosphate. With respect to regulation, regulated by cyclic AMP receptor 1 through a guanine nucleotide binding protein and protein CRAC. Both positively and negatively regulated by extracellular cAMP; this regulation is part of the mechanism that establishes the oscillatory cAMP waves during aggregation. Functionally, coordinates cell aggregation by synthesizing the cAMP that influences differentiation and morphogenesis of cells within a developing multicellular structure. This is Adenylate cyclase, aggregation specific (acaA) from Dictyostelium discoideum (Social amoeba).